A 293-amino-acid chain; its full sequence is Phosphatidylglycerol--prolipoprotein diacylglyceryl transferase (293 aa).

The next 4 helical transmembrane spans lie at 45–65, 81–101, 115–135, and 144–164; these read FELR…YFVA, ELIF…YVLF, IWEG…TGFL, and FTFL…QAIG. An a 1,2-diacyl-sn-glycero-3-phospho-(1'-sn-glycerol)-binding site is contributed by Arg-165. Transmembrane regions (helical) follow at residues 204 to 224, 231 to 249, and 262 to 282; these read PTFL…SVYF, HGEV…RIVI, and IKAA…GFLI.

This sequence belongs to the Lgt family.

It is found in the cell inner membrane. It carries out the reaction L-cysteinyl-[prolipoprotein] + a 1,2-diacyl-sn-glycero-3-phospho-(1'-sn-glycerol) = an S-1,2-diacyl-sn-glyceryl-L-cysteinyl-[prolipoprotein] + sn-glycerol 1-phosphate + H(+). Its pathway is protein modification; lipoprotein biosynthesis (diacylglyceryl transfer). Catalyzes the transfer of the diacylglyceryl group from phosphatidylglycerol to the sulfhydryl group of the N-terminal cysteine of a prolipoprotein, the first step in the formation of mature lipoproteins. This Thermotoga maritima (strain ATCC 43589 / DSM 3109 / JCM 10099 / NBRC 100826 / MSB8) protein is Phosphatidylglycerol--prolipoprotein diacylglyceryl transferase.